Consider the following 437-residue polypeptide: tRNA-2-methylthio-N(6)-dimethylallyladenosine synthase (437 aa).

The 116-residue stretch at 2 to 117 (KHLYIKTFGC…LPQMIQRALD (116 aa)) folds into the MTTase N-terminal domain. Positions 11, 48, 80, 154, 158, and 161 each coordinate [4Fe-4S] cluster. A Radical SAM core domain is found at 140–372 (RAQGVVGQVT…QQLLNTQQLQ (233 aa)). Positions 375–437 (KARVGRRESV…LPNSLRGRLV (63 aa)) constitute a TRAM domain.

The protein belongs to the methylthiotransferase family. MiaB subfamily. As to quaternary structure, monomer. Requires [4Fe-4S] cluster as cofactor.

The protein resides in the cytoplasm. It catalyses the reaction N(6)-dimethylallyladenosine(37) in tRNA + (sulfur carrier)-SH + AH2 + 2 S-adenosyl-L-methionine = 2-methylsulfanyl-N(6)-dimethylallyladenosine(37) in tRNA + (sulfur carrier)-H + 5'-deoxyadenosine + L-methionine + A + S-adenosyl-L-homocysteine + 2 H(+). Functionally, catalyzes the methylthiolation of N6-(dimethylallyl)adenosine (i(6)A), leading to the formation of 2-methylthio-N6-(dimethylallyl)adenosine (ms(2)i(6)A) at position 37 in tRNAs that read codons beginning with uridine. The polypeptide is tRNA-2-methylthio-N(6)-dimethylallyladenosine synthase (Magnetococcus marinus (strain ATCC BAA-1437 / JCM 17883 / MC-1)).